The chain runs to 466 residues: Ribosomal protein uS12 methylthiotransferase RimO (466 aa).

Residues 31–141 (PTIGMVSLGC…VLDAVHGAVP (111 aa)) form the MTTase N-terminal domain. Cys-40, Cys-76, Cys-105, Cys-172, Cys-176, and Cys-179 together coordinate [4Fe-4S] cluster. Residues 158-397 (LTPRHYSYLK…MAKAQAISEA (240 aa)) enclose the Radical SAM core domain. Residues 400-466 (AARVGQVIEV…GEYDLWGRLR (67 aa)) form the TRAM domain.

It belongs to the methylthiotransferase family. RimO subfamily. [4Fe-4S] cluster serves as cofactor.

Its subcellular location is the cytoplasm. The enzyme catalyses L-aspartate(89)-[ribosomal protein uS12]-hydrogen + (sulfur carrier)-SH + AH2 + 2 S-adenosyl-L-methionine = 3-methylsulfanyl-L-aspartate(89)-[ribosomal protein uS12]-hydrogen + (sulfur carrier)-H + 5'-deoxyadenosine + L-methionine + A + S-adenosyl-L-homocysteine + 2 H(+). Catalyzes the methylthiolation of an aspartic acid residue of ribosomal protein uS12. This is Ribosomal protein uS12 methylthiotransferase RimO from Ruegeria pomeroyi (strain ATCC 700808 / DSM 15171 / DSS-3) (Silicibacter pomeroyi).